Reading from the N-terminus, the 1411-residue chain is ATP-dependent permease PDR11 (1411 aa).

Residues serine 2–glutamine 388 are Cytoplasmic-facing. The ABC transporter 1 domain occupies valine 31–asparagine 273. The chain crosses the membrane as a helical span at residues phenylalanine 389 to threonine 409. Topologically, residues threonine 410–serine 418 are extracellular. Residues leucine 419–phenylalanine 439 form a helical membrane-spanning segment. Residues glutamine 440–lysine 471 lie on the Cytoplasmic side of the membrane. A helical transmembrane segment spans residues phenylalanine 472 to alanine 492. The Extracellular segment spans residues alanine 493–arginine 494. The chain crosses the membrane as a helical span at residues phenylalanine 495–leucine 515. Residues threonine 516 to serine 524 are Cytoplasmic-facing. A helical transmembrane segment spans residues methionine 525–isoleucine 545. Residues tyrosine 546 to phenylalanine 636 are Extracellular-facing. Asparagine 595 is a glycosylation site (N-linked (GlcNAc...) asparagine). The helical transmembrane segment at glycine 637 to isoleucine 657 threads the bilayer. Topologically, residues threonine 658 to threonine 1090 are cytoplasmic. Residues isoleucine 751–phenylalanine 979 enclose the ABC transporter 2 domain. Glycine 782–threonine 789 contacts ATP. The helical transmembrane segment at tyrosine 1091–tryptophan 1111 threads the bilayer. The Extracellular segment spans residues arginine 1112–isoleucine 1117. Residues asparagine 1118–isoleucine 1138 traverse the membrane as a helical segment. Residues asparagine 1139 to glutamate 1175 are Cytoplasmic-facing. Residues leucine 1176–phenylalanine 1196 form a helical membrane-spanning segment. The Extracellular segment spans residues glutamate 1197–glycine 1204. Residues valine 1205–leucine 1225 form a helical membrane-spanning segment. Topologically, residues tyrosine 1226–aspartate 1230 are cytoplasmic. The helical transmembrane segment at leucine 1231 to valine 1251 threads the bilayer. At methionine 1252–asparagine 1355 the chain is on the extracellular side. Residues asparagine 1289, asparagine 1324, and asparagine 1346 are each glycosylated (N-linked (GlcNAc...) asparagine). A helical transmembrane segment spans residues phenylalanine 1356–leucine 1376. Topologically, residues threonine 1377–valine 1411 are cytoplasmic.

This sequence belongs to the ABC transporter superfamily. ABCG family. PDR (TC 3.A.1.205) subfamily.

It is found in the membrane. In terms of biological role, transporter involved in the uptake of sterol. The protein is ATP-dependent permease PDR11 (PDR11) of Saccharomyces cerevisiae (strain ATCC 204508 / S288c) (Baker's yeast).